Reading from the N-terminus, the 156-residue chain is Small ribosomal subunit protein uS7 (156 aa).

Belongs to the universal ribosomal protein uS7 family. In terms of assembly, part of the 30S ribosomal subunit. Contacts proteins S9 and S11.

In terms of biological role, one of the primary rRNA binding proteins, it binds directly to 16S rRNA where it nucleates assembly of the head domain of the 30S subunit. Is located at the subunit interface close to the decoding center, probably blocks exit of the E-site tRNA. This is Small ribosomal subunit protein uS7 from Rhizobium johnstonii (strain DSM 114642 / LMG 32736 / 3841) (Rhizobium leguminosarum bv. viciae).